Here is a 143-residue protein sequence, read N- to C-terminus: HTH-type transcriptional regulator CueR (143 aa).

Residues 11-79 (TYRISELAAL…LSDIKDRLEN (69 aa)) enclose the HTH merR-type domain. The segment at residues 14-33 (ISELAALAGVTKRTVDYYTN) is a DNA-binding region (H-T-H motif).

Functionally, transcriptional activator of the copZA operon. This is HTH-type transcriptional regulator CueR (cueR) from Bacillus subtilis (strain 168).